A 298-amino-acid chain; its full sequence is Putative glycylpeptide N-tetradecanoyltransferase (298 aa).

This sequence belongs to the NMT family.

It catalyses the reaction N-terminal glycyl-[protein] + tetradecanoyl-CoA = N-tetradecanoylglycyl-[protein] + CoA + H(+). Its function is as follows. Adds a myristoyl group to the N-terminal glycine residue of certain proteins. The polypeptide is Putative glycylpeptide N-tetradecanoyltransferase (Melanoplus sanguinipes (Migratory grasshopper)).